The chain runs to 484 residues: ATP-dependent rRNA helicase RRP3 (484 aa).

Low complexity-rich tracts occupy residues 1–14 (MPSP…SMSQ) and 22–34 (PSPA…APEA). Residues 1–38 (MPSPSPEASSSMSQPGPPSRSPSPASSNPDAPEASHNK) form a disordered region. The Q motif signature appears at 38–66 (KTFADLGISPELCRACASMGFKKPSDIQA). The Helicase ATP-binding domain occupies 69–240 (IPHALEGKDI…RASLNKPVRV (172 aa)). Residue 82–89 (AQTGSGKT) participates in ATP binding. The DEAD box motif lies at 188 to 191 (DEAD). One can recognise a Helicase C-terminal domain in the interval 263–411 (NKDAYLLYLA…SFDVDKEAVA (149 aa)). A disordered region spans residues 425–484 (ALEMRESGTGGGGGKRGRDKGKRKTFGDGDDRDRDDDVVEAGVPRKKNKFTPGGKKKARK). Basic residues-rich tracts occupy residues 439–448 (KRGRDKGKRK) and 468–484 (PRKK…KARK).

It belongs to the DEAD box helicase family. DDX47/RRP3 subfamily. In terms of assembly, interacts with the SSU processome.

It is found in the nucleus. It carries out the reaction ATP + H2O = ADP + phosphate + H(+). Functionally, ATP-dependent rRNA helicase required for pre-ribosomal RNA processing. Involved in the maturation of the 35S-pre-rRNA and to its cleavage to mature 18S rRNA. This is ATP-dependent rRNA helicase RRP3 from Cryptococcus neoformans var. neoformans serotype D (strain B-3501A) (Filobasidiella neoformans).